Reading from the N-terminus, the 275-residue chain is Transmembrane protein 106B (275 aa).

Positions 1–24 (MGKSLSHLPLHSNKEDGYDGVTST) are disordered. A lipid anchor (N-myristoyl glycine) is attached at Gly-2. The Cytoplasmic segment spans residues 2-97 (GKSLSHLPLH…QRLRPRRTKL (96 aa)). Ser-34 carries the phosphoserine modification. A helical transmembrane segment spans residues 98 to 118 (YVMASVFVCLLLSGLAVFFLF). At 119–275 (PRSIDVKYIG…EYLNVLQPQQ (157 aa)) the chain is on the lumenal side. N-linked (GlcNAc...) asparagine glycosylation is found at Asn-146, Asn-152, Asn-165, and Asn-184. Cys-215 and Cys-254 are disulfide-bonded. Residue Asn-257 is glycosylated (N-linked (GlcNAc...) asparagine).

Belongs to the TMEM106 family. As to quaternary structure, can form homomers. Interacts (via N-terminus) with MAP6 (via C-terminus). Interacts (via C-terminus) with the vacuolar-type ATPase subunit ATP6AP1. Interacts (via N-terminus) with AP2M1 and CLTC. Interacts with TMEM106C. In terms of tissue distribution, expressed in cortical neurons (at protein level).

It localises to the late endosome membrane. It is found in the lysosome membrane. Its subcellular location is the cell membrane. In terms of biological role, involved in dendrite morphogenesis and maintenance by regulating lysosomal trafficking. May act as a molecular brake for retrograde transport of late endosomes/lysosomes, possibly via its interaction with MAP6. In neurons, may also play a role in the regulation of lysosomal size and responsiveness to stress. Required for proper lysosomal acidification. In neurons, involved in the transport of late endosomes/lysosomes. May be involved in dendrite morphogenesis and maintenance by regulating lysosomal trafficking. May act as a molecular brake for retrograde transport of late endosomes/lysosomes, possibly via its interaction with MAP6. In motoneurons, may mediate the axonal transport of lysosomes and axonal sorting at the initial segment. It remains unclear whether TMEM106B affects the transport of moving lysosomes in the anterograde or retrograde direction in neurites and whether it is particularly important in the sorting of lysosomes in axons or in dendrites. In neurons, may also play a role in the regulation of lysosomal size and responsiveness to stress. Required for proper lysosomal acidification. The polypeptide is Transmembrane protein 106B (Tmem106b) (Rattus norvegicus (Rat)).